Consider the following 503-residue polypeptide: Probable zinc metalloprotease UREG_01421 (503 aa).

The first 24 residues, 1 to 24, serve as a signal peptide directing secretion; the sequence is MHSLSSALAGSTFVLLFLCLLASA. N105 carries N-linked (GlcNAc...) asparagine glycosylation. Residues H176, D196, and E232 each contribute to the Zn(2+) site. N-linked (GlcNAc...) asparagine glycosylation occurs at N247. D259 is a Zn(2+) binding site. In terms of domain architecture, Fibronectin type-III spans 416–503; that stretch reads MPRNVRVSTR…RGVAVLPFPA (88 aa). N-linked (GlcNAc...) asparagine glycosylation is present at N429.

It belongs to the peptidase M28 family. M28B subfamily. Requires Zn(2+) as cofactor.

It is found in the secreted. The chain is Probable zinc metalloprotease UREG_01421 from Uncinocarpus reesii (strain UAMH 1704).